Reading from the N-terminus, the 297-residue chain is Zinc finger protein 784 (297 aa).

Pro residues predominate over residues 1 to 12 (MAAARPDPPIPS). Residues 1 to 39 (MAAARPDPPIPSSPTRESPSPEPPDLVLVPDGRPVTPPG) are disordered. Serine 13 is modified (phosphoserine). 3 C2H2-type zinc fingers span residues 64 to 86 (FHCA…EHGH), 100 to 122 (SRCH…YSLH), and 128 to 150 (YRCS…QHRH). Residues 149-175 (RHGVEPGTSERLLPTTTTGQPNSRVAQ) are disordered. Residues 162–173 (PTTTTGQPNSRV) are compositionally biased toward polar residues. 3 C2H2-type zinc fingers span residues 195 to 217 (FACR…ERVH), 223 to 245 (YHCS…ARIH), and 251 to 273 (FRCM…QRTH). A disordered region spans residues 268-297 (KHQRTHFHGPGSGVGESRGQLRSSSVSQES). Over residues 287-297 (QLRSSSVSQES) the composition is skewed to polar residues.

It belongs to the krueppel C2H2-type zinc-finger protein family.

It localises to the nucleus. Its function is as follows. May be involved in transcriptional regulation. The protein is Zinc finger protein 784 (Znf784) of Mus musculus (Mouse).